The primary structure comprises 674 residues: tRNA-guanine(15) transglycosylase (674 aa).

Catalysis depends on D90, which acts as the Nucleophile. Residues D125 and A192 each coordinate substrate. Zn(2+)-binding residues include C275, C277, and C280. One can recognise a PUA domain in the interval 596-671 (HNRVVVSEDS…QAIKTRKWKK (76 aa)).

It belongs to the archaeosine tRNA-ribosyltransferase family. Requires Zn(2+) as cofactor.

The catalysed reaction is guanosine(15) in tRNA + 7-cyano-7-deazaguanine = 7-cyano-7-carbaguanosine(15) in tRNA + guanine. The protein operates within tRNA modification; archaeosine-tRNA biosynthesis. Its function is as follows. Exchanges the guanine residue with 7-cyano-7-deazaguanine (preQ0) at position 15 in the dihydrouridine loop (D-loop) of archaeal tRNAs. This is tRNA-guanine(15) transglycosylase from Methanosphaera stadtmanae (strain ATCC 43021 / DSM 3091 / JCM 11832 / MCB-3).